Here is a 1429-residue protein sequence, read N- to C-terminus: Protein lin-12 (1429 aa).

The N-terminal stretch at 1-15 (MRIPTICFLFLLISL) is a signal peptide. Over 16–908 (SKSLHIGSCL…GNNTGFLSWN (893 aa)) the chain is Extracellular. 2 EGF-like domains span residues 20–61 (HIGS…EYCE) and 114–150 (TQGWCYPSVCMNGGQCIGAGNRAKCACPDGFKGERCE). 9 cysteine pairs are disulfide-bonded: cysteine 24/cysteine 35, cysteine 29/cysteine 49, cysteine 51/cysteine 60, cysteine 118/cysteine 129, cysteine 123/cysteine 138, cysteine 140/cysteine 149, cysteine 156/cysteine 169, cysteine 163/cysteine 178, and cysteine 180/cysteine 189. An N-linked (GlcNAc...) asparagine glycan is attached at asparagine 41. The 39-residue stretch at 152 to 190 (DVNECEENKNACGNRSTCMNTLGTYICVCPQGFLPPDCL) folds into the EGF-like 3; calcium-binding domain. Asparagine 165 carries N-linked (GlcNAc...) asparagine glycosylation. The N-linked (GlcNAc...) asparagine glycan is linked to asparagine 194. EGF-like domains are found at residues 201-246 (KQPV…STCE), 250-285 (KEDSCASNPCSHGVCISFSGGFQCICDDGYSGSYCQ), 287-323 (GKDNCVNNKCEAGSKCINGVNSYFCDCPPERTGPYCE), and 323-363 (EKMD…ILCE). Cystine bridges form between cysteine 205–cysteine 227, cysteine 221–cysteine 234, cysteine 236–cysteine 245, cysteine 254–cysteine 264, cysteine 259–cysteine 273, cysteine 275–cysteine 284, cysteine 291–cysteine 302, cysteine 296–cysteine 311, cysteine 313–cysteine 322, cysteine 327–cysteine 339, cysteine 334–cysteine 351, cysteine 353–cysteine 362, cysteine 369–cysteine 381, cysteine 375–cysteine 390, cysteine 392–cysteine 401, cysteine 408–cysteine 419, cysteine 413–cysteine 429, cysteine 431–cysteine 440, cysteine 462–cysteine 475, cysteine 469–cysteine 480, cysteine 482–cysteine 491, cysteine 507–cysteine 518, cysteine 512–cysteine 529, cysteine 531–cysteine 540, cysteine 547–cysteine 558, cysteine 552–cysteine 567, cysteine 569–cysteine 578, cysteine 586–cysteine 597, cysteine 591–cysteine 607, and cysteine 609–cysteine 618. The 38-residue stretch at 365–402 (DKNECLSENMCLNNGTCVNLPGSFRCDCARGFGGKWCD) folds into the EGF-like 8; calcium-binding domain. A glycan (N-linked (GlcNAc...) asparagine) is linked at asparagine 378. 5 EGF-like domains span residues 404–441 (PLNMCQDFHCENDGTCMHTSDHSPVCQCKNGFIGKRCE), 449–492 (GGVR…NQCE), 503–541 (SENLCLSDPCMNNATCIDVDAHIGYACICKQGFEGDICE), 543–579 (HKDLCLENPCSNGGVCHQHRESFSCDCPPGFYGNGCE), and 582–619 (KMFRCLKSTCQNGGVCINEEEKGRKCECSYGFSGARCE). Asparagine 515 is a glycosylation site (N-linked (GlcNAc...) asparagine). Residue asparagine 623 is glycosylated (N-linked (GlcNAc...) asparagine). Cystine bridges form between cysteine 638–cysteine 661, cysteine 643–cysteine 656, cysteine 652–cysteine 668, cysteine 678–cysteine 702, cysteine 684–cysteine 697, cysteine 693–cysteine 709, cysteine 716–cysteine 742, cysteine 724–cysteine 737, and cysteine 733–cysteine 749. LNR repeat units follow at residues 638-674 (CEKRKCSERANDGNCDADCNYAACKFDGGDCSGKREP), 678-709 (CRYGNMCADFFANGVCNQACNNEECLYDGMDC), and 716-754 (CPVKIREHCASRFANGICDPECNTNGCGFDGGDCDNETN). N-linked (GlcNAc...) asparagine glycosylation is found at asparagine 751, asparagine 754, and asparagine 900. The helical transmembrane segment at 909-931 (ALLLIGAGCLIVMVVLMLGALPG) threads the bilayer. Over 932–1429 (NRTRKRRMIN…TRYSEPAHYF (498 aa)) the chain is Cytoplasmic. An RAM domain region spans residues 933-952 (RTRKRRMINASVWMPPMENE). 5 ANK repeats span residues 1093 to 1122 (DENTPLMLAVLARRRRLVAYLMKAGADPTI), 1126 to 1158 (SERSALHQAAANRDFGMMVYMLNSTKLKGDIEE), 1162 to 1194 (NGMTALMIVAHNEGRDQVASAKLLVEKGAKVDY), 1206 to 1236 (KGRTALHYAAQVSNMPIVKYLVGEKGSNKDK), and 1240 to 1269 (DGKTPIMLAAQEGRIEVVMYLIQQGASVEA). The segment at 1308 to 1374 (IQHTHQPQPS…TTHTTPTSLN (67 aa)) is disordered. Basic residues predominate over residues 1319 to 1330 (KVTRAPKKQTSR). A compositionally biased stretch (polar residues) spans 1361 to 1374 (HFMNTTHTTPTSLN).

It belongs to the NOTCH family. May interact with dsl-1. May interact with lag-2. May interact with osm-11. Interacts with sel-10. In terms of assembly, when activated, the lin-12/Notch intracellular domain (NICD) can become a component of a complex consisting of at least the NICD, lag-1 and sel-8/lag-3. The NICD probably facilitates ordered assembly of the ternary complex via allosteric interactions of its RBP-j associated molecule (RAM) domain with lag-1. In terms of processing, upon binding its ligands, it is cleaved (S2 cleavage) in its extracellular domain, close to the transmembrane domain. S2 cleavage is probably mediated by the metalloproteases adm-4 and sup-17. It is then cleaved (S3 cleavage) downstream of its transmembrane domain, releasing it from the cell membrane; S3 cleavage requires a multiprotein gamma-secretase complex, which may include presenilin sel-12.

It is found in the apical cell membrane. Its subcellular location is the nucleus. Its function is as follows. Essential signaling protein which has a major role in many developmental processes; involved in cell fate decisions that require cell-cell interactions. Probable membrane-bound receptor for putative ligands lag-2, apx-1, dsl-1 and osm-11. Upon ligand activation, and releasing from the cell membrane, the lin-12/Notch intracellular domain (NICD) forms a transcriptional activator complex with lag-1 and lag-3 and regulates expression of various genes. Required for ventral cell fates in the postembryonic mesodermal lineage (M lineage) and in uterine precursor cells. Activity in cell fate decisions and tumorigenesis is negatively regulated by sel-10. Best known for involvement in cell-fate decisions during development, but also plays roles in other events. Regulates recovery from the dauer larval state. Modulates chemosensory avoidance of octanol and quiescence during molting. Promotes basement membrane mobility during tissue remodeling. Involved in establishing left-right asymmetry during intestinal organogenesis. This is Protein lin-12 from Caenorhabditis elegans.